A 738-amino-acid polypeptide reads, in one-letter code: Ethylene receptor (738 aa).

The next 3 helical transmembrane spans lie at 23-43, 54-74, and 92-112; these read ISDFFIALAYFSIPLELIYFV, VLVQFGAFIVLCGATHLINLW, and VLTAVVSCATALMLVHIIPDL. Cu cation is bound by residues Cys-65 and His-69. In terms of domain architecture, GAF spans 158–307; that stretch reads DRHTILKTTL…VVADQVAVAL (150 aa). One can recognise a Histidine kinase domain in the interval 350-589; the sequence is VMNHEMRTPM…IFIVKLGFAE (240 aa). His-353 bears the Phosphohistidine; by autocatalysis mark. The 118-residue stretch at 612–729 folds into the Response regulatory domain; it reads PGLKVLVMDD…KMRSVLSELL (118 aa). The residue at position 660 (Asp-660) is a 4-aspartylphosphate.

Belongs to the ethylene receptor family. Homodimer; disulfide-linked. The cofactor is Cu cation. Activation probably requires a transfer of a phosphate group between a His in the transmitter domain and an Asp of the receiver domain.

It localises to the endoplasmic reticulum membrane. The enzyme catalyses ATP + protein L-histidine = ADP + protein N-phospho-L-histidine.. May act early in the ethylene signal transduction pathway, possibly as an ethylene receptor, or as a regulator of the pathway. This is Ethylene receptor (ETR1) from Prunus persica (Peach).